Consider the following 485-residue polypeptide: Argininosuccinate lyase (485 aa).

Belongs to the lyase 1 family. Argininosuccinate lyase subfamily.

It is found in the cytoplasm. It catalyses the reaction 2-(N(omega)-L-arginino)succinate = fumarate + L-arginine. It functions in the pathway amino-acid biosynthesis; L-arginine biosynthesis; L-arginine from L-ornithine and carbamoyl phosphate: step 3/3. This Paracidovorax citrulli (strain AAC00-1) (Acidovorax citrulli) protein is Argininosuccinate lyase.